Here is a 224-residue protein sequence, read N- to C-terminus: MTSWIELLDKQIEDQHMLKHEFYQRWSEGKLEKQQLQAYAKDYYLHIKAFPCYLSALHARCDDLQIRRQILENLMDEEAGNPNHIDLWRQFALSLGVSEEELANHEFSQAAQDMVATFRRLCDMPQLAVGLGALYTYEIQIPQVCVEKIRGLKEYFGVSARGYAYFTVHQEADIKHASEEKEMLQTLVGRENPDAVLQGSQEVLDTLWNFLSSFINSTEPCSCK.

Residues glutamate 77, histidine 84, glutamate 138, histidine 169, aspartate 173, and histidine 176 each contribute to the Fe(2+) site.

Belongs to the CADD family. As to quaternary structure, homodimer. Fe(2+) serves as cofactor. The cofactor is Mn(2+).

Functionally, involved in de novo para-aminobenzoate (PABA) biosynthesis. Acts as a self-sacrificing or 'suicide' enzyme that utilizes its own active site tyrosine residue(s) as the substrate for PABA synthesis. The side chain of the tyrosine residue is released from the protein backbone via cleavage of the C(alpha)-C(beta) bond, leaving a glycine in place of the original tyrosine residue. Reaction requires O(2) and a reduced dimetal cofactor. This chain is 4-aminobenzoate synthase, found in Chlamydia pneumoniae (Chlamydophila pneumoniae).